A 470-amino-acid chain; its full sequence is Siroheme synthase (470 aa).

The interval 1–201 (MDYFPIFCQL…NDHVQADQHV (201 aa)) is precorrin-2 dehydrogenase /sirohydrochlorin ferrochelatase. NAD(+) contacts are provided by residues 22 to 23 (EI) and 43 to 44 (CE). Ser-128 is subject to Phosphoserine. Residues 213 to 470 (GEVVLVGAGP…KVTECVAHVG (258 aa)) are uroporphyrinogen-III C-methyltransferase. Pro-222 lines the S-adenosyl-L-methionine pocket. Residue Asp-245 is the Proton acceptor of the active site. The active-site Proton donor is the Lys-267. Residues 298–300 (GGD), Ile-303, 328–329 (TA), Met-379, and Gly-408 contribute to the S-adenosyl-L-methionine site.

In the N-terminal section; belongs to the precorrin-2 dehydrogenase / sirohydrochlorin ferrochelatase family. This sequence in the C-terminal section; belongs to the precorrin methyltransferase family.

The catalysed reaction is uroporphyrinogen III + 2 S-adenosyl-L-methionine = precorrin-2 + 2 S-adenosyl-L-homocysteine + H(+). It carries out the reaction precorrin-2 + NAD(+) = sirohydrochlorin + NADH + 2 H(+). The enzyme catalyses siroheme + 2 H(+) = sirohydrochlorin + Fe(2+). Its pathway is cofactor biosynthesis; adenosylcobalamin biosynthesis; precorrin-2 from uroporphyrinogen III: step 1/1. It participates in cofactor biosynthesis; adenosylcobalamin biosynthesis; sirohydrochlorin from precorrin-2: step 1/1. The protein operates within porphyrin-containing compound metabolism; siroheme biosynthesis; precorrin-2 from uroporphyrinogen III: step 1/1. It functions in the pathway porphyrin-containing compound metabolism; siroheme biosynthesis; siroheme from sirohydrochlorin: step 1/1. Its pathway is porphyrin-containing compound metabolism; siroheme biosynthesis; sirohydrochlorin from precorrin-2: step 1/1. In terms of biological role, multifunctional enzyme that catalyzes the SAM-dependent methylations of uroporphyrinogen III at position C-2 and C-7 to form precorrin-2 via precorrin-1. Then it catalyzes the NAD-dependent ring dehydrogenation of precorrin-2 to yield sirohydrochlorin. Finally, it catalyzes the ferrochelation of sirohydrochlorin to yield siroheme. The protein is Siroheme synthase of Yersinia pestis.